A 300-amino-acid chain; its full sequence is Cation-efflux pump FieF (300 aa).

Transmembrane regions (helical) follow at residues 12–32 (AAIA…FAWW), 39–59 (ILAA…NLLV), 82–102 (AALA…LTSI), and 114–134 (PGVG…LVTF). Asp45 and Asp49 together coordinate Zn(2+). Residues His153 and Asp157 each coordinate Zn(2+). A run of 2 helical transmembrane segments spans residues 156–176 (SDVM…YGWH) and 178–198 (ADAL…LRMG).

This sequence belongs to the cation diffusion facilitator (CDF) transporter (TC 2.A.4) family. FieF subfamily. As to quaternary structure, homodimer.

The protein localises to the cell inner membrane. It catalyses the reaction Zn(2+)(in) + H(+)(out) = Zn(2+)(out) + H(+)(in). It carries out the reaction Cd(2+)(in) + H(+)(out) = Cd(2+)(out) + H(+)(in). The catalysed reaction is Fe(2+)(in) + H(+)(out) = Fe(2+)(out) + H(+)(in). Functionally, divalent metal cation transporter which exports Zn(2+), Cd(2+) and possibly Fe(2+). May be involved in zinc and iron detoxification by efflux. The chain is Cation-efflux pump FieF from Salmonella arizonae (strain ATCC BAA-731 / CDC346-86 / RSK2980).